A 917-amino-acid polypeptide reads, in one-letter code: Isoleucine--tRNA ligase (917 aa).

The 'HIGH' region signature appears at 57 to 67 (PYANGNLHMGH). L-isoleucyl-5'-AMP is bound at residue Glu-554. The 'KMSKS' region signature appears at 595–599 (KMSKS). Lys-598 is a binding site for ATP. Zn(2+) is bound by residues Cys-886, Cys-889, Cys-906, and Cys-909.

It belongs to the class-I aminoacyl-tRNA synthetase family. IleS type 1 subfamily. In terms of assembly, monomer. It depends on Zn(2+) as a cofactor.

The protein resides in the cytoplasm. The enzyme catalyses tRNA(Ile) + L-isoleucine + ATP = L-isoleucyl-tRNA(Ile) + AMP + diphosphate. Its function is as follows. Catalyzes the attachment of isoleucine to tRNA(Ile). As IleRS can inadvertently accommodate and process structurally similar amino acids such as valine, to avoid such errors it has two additional distinct tRNA(Ile)-dependent editing activities. One activity is designated as 'pretransfer' editing and involves the hydrolysis of activated Val-AMP. The other activity is designated 'posttransfer' editing and involves deacylation of mischarged Val-tRNA(Ile). The chain is Isoleucine--tRNA ligase from Staphylococcus aureus (strain Mu3 / ATCC 700698).